The following is a 342-amino-acid chain: Ribosomal RNA small subunit methyltransferase C (342 aa).

Belongs to the methyltransferase superfamily. RsmC family. In terms of assembly, monomer.

It is found in the cytoplasm. It carries out the reaction guanosine(1207) in 16S rRNA + S-adenosyl-L-methionine = N(2)-methylguanosine(1207) in 16S rRNA + S-adenosyl-L-homocysteine + H(+). Specifically methylates the guanine in position 1207 of 16S rRNA in the 30S particle. This chain is Ribosomal RNA small subunit methyltransferase C, found in Enterobacter sp. (strain 638).